The chain runs to 154 residues: Ascorbate-specific PTS system EIIA component (154 aa).

The PTS EIIA type-2 domain occupies 6 to 150 (SLAENNSIRL…QEVLDLIDRT (145 aa)). His68 acts as the Tele-phosphohistidine intermediate in catalysis. His68 carries the post-translational modification Phosphohistidine.

It is found in the cytoplasm. Its function is as follows. The phosphoenolpyruvate-dependent sugar phosphotransferase system (sugar PTS), a major carbohydrate active transport system, catalyzes the phosphorylation of incoming sugar substrates concomitantly with their translocation across the cell membrane. The enzyme II UlaABC PTS system is involved in ascorbate transport. This is Ascorbate-specific PTS system EIIA component (ulaC) from Salmonella typhi.